The primary structure comprises 1241 residues: uncharacterized protein (1241 aa).

Residues 21–49 (ILNDNVREINIAKKEIKQLREYVGILQQN) adopt a coiled-coil conformation. The next 3 membrane-spanning stretches (helical) occupy residues 261-281 (VNAI…FVLG), 918-938 (AVVG…GLVA), and 947-967 (GHIV…VIGG). The tract at residues 1005-1028 (THIGKEDSNNGVSTSTNKRSIGKA) is disordered. The span at 1013 to 1028 (NNGVSTSTNKRSIGKA) shows a compositional bias: polar residues.

It is found in the host membrane. This is an uncharacterized protein from Diadromus pulchellus (Parasitic wasp).